A 117-amino-acid polypeptide reads, in one-letter code: Acidic phospholipase A2 (117 aa).

7 disulfides stabilise this stretch: Cys11–Cys70, Cys25–Cys116, Cys27–Cys43, Cys42–Cys98, Cys49–Cys91, Cys59–Cys84, and Cys77–Cys89. Residues Tyr26, Gly28, and Gly30 each coordinate Ca(2+). The active site involves His46. Asp47 contacts Ca(2+). Asn80 is a glycosylation site (N-linked (GlcNAc...) asparagine). The active site involves Asp92.

Ca(2+) serves as cofactor. Expressed by the venom gland.

The protein resides in the secreted. The catalysed reaction is a 1,2-diacyl-sn-glycero-3-phosphocholine + H2O = a 1-acyl-sn-glycero-3-phosphocholine + a fatty acid + H(+). Its function is as follows. Snake venom phospholipase A2 (PLA2) that shows strong myotoxicity and induces edema in mice. Shows no cytotoxicity in vitro. Has a strong anticoagulant effect in vitro. PLA2 catalyzes the calcium-dependent hydrolysis of the 2-acyl groups in 3-sn-phosphoglycerides. The sequence is that of Acidic phospholipase A2 from Micrurus dumerilii (Coral snake).